Reading from the N-terminus, the 449-residue chain is Wilms tumor protein (449 aa).

Positions 48–84 (YGSLGGPAPPPAPPPPPPPPPHSFIKQEPSWGGAEPH) are disordered. Residues 54-69 (PAPPPAPPPPPPPPPH) show a composition bias toward pro residues. Residues Lys-73 and Lys-177 each participate in a glycyl lysine isopeptide (Lys-Gly) (interchain with G-Cter in SUMO) cross-link. A 9aaTAD motif is present at residues 236-244 (MTWNQMNLG). 3 consecutive C2H2-type zinc fingers follow at residues 323 to 347 (FMCAYPGCNKRYFKLSHLQMHSRKH), 353 to 377 (YQCDFKDCERRFSRSDQLKRHQRRH), and 383 to 405 (FQCKTCQRKFSRSDHLKTHTRTH). 2 important for interaction with target DNA regions span residues 367 to 381 (SDQLKRHQRRHTGVK) and 393 to 401 (SRSDHLKTH). Positions 408-410 (KTS) match the KTS motif motif. The C2H2-type 4 zinc finger occupies 414–438 (FSCRWPSCQKKFARSDELVRHHNMH). Lys-444 is covalently cross-linked (Glycyl lysine isopeptide (Lys-Gly) (interchain with G-Cter in SUMO2)).

It belongs to the EGR C2H2-type zinc-finger protein family. As to quaternary structure, homodimer. Interacts with WTIP. Interacts with actively translating polysomes. Detected in nuclear ribonucleoprotein (mRNP) particles. Interacts with HNRNPU via the zinc-finger region. Interacts with U2AF2. Interacts with CITED2. Interacts with ZNF224 via the zinc-finger region. Interacts with WTAP and SRY. Interacts with AMER1. Interacts with RBM4. In terms of tissue distribution, expressed in the kidney and a subset of hematopoietic cells.

It is found in the nucleus. Its subcellular location is the nucleolus. The protein resides in the cytoplasm. The protein localises to the nucleus speckle. It localises to the nucleoplasm. In terms of biological role, transcription factor that plays an important role in cellular development and cell survival. Recognizes and binds to the DNA sequence 5'-GCG(T/G)GGGCG-3'. Regulates the expression of numerous target genes, including EPO. Plays an essential role for development of the urogenital system. It has a tumor suppressor as well as an oncogenic role in tumor formation. Function may be isoform-specific: isoforms lacking the KTS motif may act as transcription factors. Isoforms containing the KTS motif may bind mRNA and play a role in mRNA metabolism or splicing. Isoform 1 has lower affinity for DNA, and can bind RNA. The sequence is that of Wilms tumor protein (WT1) from Homo sapiens (Human).